A 109-amino-acid polypeptide reads, in one-letter code: Flagellar hook-basal body complex protein FliE (109 aa).

Belongs to the FliE family.

It is found in the bacterial flagellum basal body. The sequence is that of Flagellar hook-basal body complex protein FliE from Pseudomonas fluorescens (strain SBW25).